A 196-amino-acid chain; its full sequence is Rho-related GTP-binding protein RhoB (196 aa).

Residue 12–19 coordinates GTP; sequence GDGACGKT. Residue Tyr34 is glycosylated (O-linked (GlcNAc) tyrosine; by Photorhabdus PAU_02230). The short motif at 34 to 42 is the Effector region element; sequence YVPTVFENY. A glycan ((Microbial infection) O-linked (Glc) threonine; by C.difficile toxins TcdA and TcdB) is linked at Thr37. Asn41 carries the post-translational modification ADP-ribosylasparagine; by botulinum toxin. Residues 59-63 and 117-120 contribute to the GTP site; these read DTAGQ and NKKD. Phosphotyrosine is present on Tyr154. S-palmitoyl cysteine attachment occurs at residues Cys189 and Cys192. Cys193 carries the post-translational modification Cysteine methyl ester. A lipid anchor (S-farnesyl cysteine; in plasma membrane form) is attached at Cys193. Cys193 carries the S-geranylgeranyl cysteine; in endosomal form lipid modification. Residues 194–196 constitute a propeptide, removed in mature form; the sequence is KVL.

Belongs to the small GTPase superfamily. Rho family. In terms of assembly, binds ROCK1 and ROCK2. Also binds PKN1/PRK1. Interacts with ARGGEF3. Interacts with RTKN. Interacts with AKAP13. Interacts with RIPOR1. Prenylation specifies the subcellular location of RHOB. The farnesylated form is localized to the plasma membrane while the geranylgeranylated form is localized to the endosome. In terms of processing, (Microbial infection) Glycosylated at Tyr-34 by Photorhabdus asymbiotica toxin PAU_02230. Mono-O-GlcNAcylation by PAU_02230 inhibits downstream signaling by an impaired interaction with diverse regulator and effector proteins of Rho and leads to actin disassembly. Post-translationally, (Microbial infection) Glucosylated at Thr-37 by C.difficile toxins TcdA and TcdB in the colonic epithelium. Monoglucosylation completely prevents the recognition of the downstream effector, blocking the GTPases in their inactive form, leading to actin cytoskeleton disruption.

The protein localises to the late endosome membrane. It is found in the cell membrane. It localises to the nucleus. The protein resides in the cleavage furrow. Functionally, mediates apoptosis in neoplastically transformed cells after DNA damage. Not essential for development but affects cell adhesion and growth factor signaling in transformed cells. Plays a negative role in tumorigenesis as deletion causes tumor formation. Involved in intracellular protein trafficking of a number of proteins. Targets PKN1 to endosomes and is involved in trafficking of the EGF receptor from late endosomes to lysosomes. Also required for stability and nuclear trafficking of AKT1/AKT which promotes endothelial cell survival during vascular development. Serves as a microtubule-dependent signal that is required for the myosin contractile ring formation during cell cycle cytokinesis. Required for genotoxic stress-induced cell death in breast cancer cells. In Homo sapiens (Human), this protein is Rho-related GTP-binding protein RhoB (RHOB).